Here is a 469-residue protein sequence, read N- to C-terminus: 6-phosphofructo-2-kinase/fructose-2,6-bisphosphatase 4 (469 aa).

A 6-phosphofructo-2-kinase region spans residues 1–249; that stretch reads MASPRELTQN…YYLMNIHVTP (249 aa). Residue 46 to 54 participates in ATP binding; it reads GLPARGKTY. Beta-D-fructose 6-phosphate-binding residues include Arg79 and Arg103. Asp129 is a catalytic residue. 2 residues coordinate beta-D-fructose 6-phosphate: Thr131 and Arg137. Residue Cys159 is part of the active site. 168–173 is a binding site for ATP; the sequence is NIVQVK. Lys173, Arg194, and Tyr198 together coordinate beta-D-fructose 6-phosphate. The fructose-2,6-bisphosphatase stretch occupies residues 250-469; the sequence is RSIYLCRHGE…EALVTVPAHQ (220 aa). Arg256 provides a ligand contact to beta-D-fructose 2,6-bisphosphate. The Tele-phosphohistidine intermediate role is filled by His257. Asn263, Gly269, and Arg306 together coordinate beta-D-fructose 2,6-bisphosphate. Glu326 functions as the Proton donor/acceptor in the catalytic mechanism. 6 residues coordinate beta-D-fructose 2,6-bisphosphate: Tyr337, Arg351, Lys355, Tyr366, Gln392, and Arg396. Residue 348–351 coordinates ATP; the sequence is FALR. Residues 392–396 and Tyr428 contribute to the ATP site; that span reads QAVMR. Thr444 is modified (phosphothreonine; by PKC).

In the C-terminal section; belongs to the phosphoglycerate mutase family. As to quaternary structure, homodimer.

It carries out the reaction beta-D-fructose 2,6-bisphosphate + H2O = beta-D-fructose 6-phosphate + phosphate. The catalysed reaction is beta-D-fructose 6-phosphate + ATP = beta-D-fructose 2,6-bisphosphate + ADP + H(+). Its activity is regulated as follows. The most important regulatory mechanism of these opposing activities is by phosphorylation and dephosphorylation of the enzyme. Its function is as follows. Synthesis and degradation of fructose 2,6-bisphosphate. The polypeptide is 6-phosphofructo-2-kinase/fructose-2,6-bisphosphatase 4 (PFKFB4) (Macaca fascicularis (Crab-eating macaque)).